The chain runs to 28 residues: uncharacterized protein (28 aa).

This is an uncharacterized protein from Saccharomyces cerevisiae (strain ATCC 204508 / S288c) (Baker's yeast).